We begin with the raw amino-acid sequence, 414 residues long: Calcium/calmodulin-dependent protein kinase cmkA (414 aa).

A Protein kinase domain is found at 23-278 (YRFGRTLGAG…SEEALKHPWL (256 aa)). Residues 29–37 (LGAGTYGIV) and lysine 50 each bind ATP. The active-site Proton acceptor is the aspartate 142. The segment at 278–314 (LKGESASDRDLLPEIRAYIARSRLKRGIEIIKLANRI) is autoinhibitory domain. Residues 293–315 (RAYIARSRLKRGIEIIKLANRIE) form a calmodulin-binding region. Disordered regions lie at residues 320 to 375 (QEED…KRSL) and 394 to 414 (EMKE…RAHS). Residues 351-364 (STENSNTHPASTGN) are compositionally biased toward polar residues.

Belongs to the protein kinase superfamily. CAMK Ser/Thr protein kinase family. CaMK subfamily. In terms of assembly, monomer. Post-translationally, autophosphorylated in a calcium/calmodulin-dependent manner.

It catalyses the reaction L-seryl-[protein] + ATP = O-phospho-L-seryl-[protein] + ADP + H(+). The enzyme catalyses L-threonyl-[protein] + ATP = O-phospho-L-threonyl-[protein] + ADP + H(+). Activated by Ca(2+)/calmodulin. Binding of calmodulin may relieve intrasteric autoinhibition. Its function is as follows. Calcium/calmodulin-dependent protein kinase. Required in nuclear division cycle for progression from G2 to mitosis. Required for hyphal growth. This is Calcium/calmodulin-dependent protein kinase cmkA (cmkA) from Emericella nidulans (strain FGSC A4 / ATCC 38163 / CBS 112.46 / NRRL 194 / M139) (Aspergillus nidulans).